The sequence spans 142 residues: Small ribosomal subunit protein eS6 (142 aa).

The segment at 117 to 142 (EKPLDELAPKKEKKEGAAGGRAPAKK) is disordered. The segment covering 118–132 (KPLDELAPKKEKKEG) has biased composition (basic and acidic residues).

This sequence belongs to the eukaryotic ribosomal protein eS6 family.

The polypeptide is Small ribosomal subunit protein eS6 (Methanocella arvoryzae (strain DSM 22066 / NBRC 105507 / MRE50)).